A 271-amino-acid chain; its full sequence is 3-methyl-2-oxobutanoate hydroxymethyltransferase (271 aa).

Residues Asp51 and Asp90 each coordinate Mg(2+). Residues 51 to 52, Asp90, and Lys118 contribute to the 3-methyl-2-oxobutanoate site; that span reads DS. Mg(2+) is bound at residue Glu120. Glu186 functions as the Proton acceptor in the catalytic mechanism.

This sequence belongs to the PanB family. In terms of assembly, homodecamer; pentamer of dimers. It depends on Mg(2+) as a cofactor.

Its subcellular location is the cytoplasm. The catalysed reaction is 3-methyl-2-oxobutanoate + (6R)-5,10-methylene-5,6,7,8-tetrahydrofolate + H2O = 2-dehydropantoate + (6S)-5,6,7,8-tetrahydrofolate. It functions in the pathway cofactor biosynthesis; (R)-pantothenate biosynthesis; (R)-pantoate from 3-methyl-2-oxobutanoate: step 1/2. In terms of biological role, catalyzes the reversible reaction in which hydroxymethyl group from 5,10-methylenetetrahydrofolate is transferred onto alpha-ketoisovalerate to form ketopantoate. In Xanthomonas oryzae pv. oryzae (strain MAFF 311018), this protein is 3-methyl-2-oxobutanoate hydroxymethyltransferase.